We begin with the raw amino-acid sequence, 1214 residues long: BOS complex subunit NOMO1 (1214 aa).

A signal peptide spans 1 to 23 (MRAGRCAAALLLLLLSGAGRAIG). The Extracellular portion of the chain corresponds to 24 to 1150 (SEDIVVGCGG…RKLPEQDIAQ (1127 aa)). N-linked (GlcNAc...) asparagine glycans are attached at residues Asn42, Asn210, and Asn610. A coiled-coil region spans residues 692–720 (KSAQELRREQQLAEIETRRQEREKNGKEE). The segment covering 708-726 (TRRQEREKNGKEEGEEGRA) has biased composition (basic and acidic residues). The interval 708–733 (TRRQEREKNGKEEGEEGRARPPGQEM) is disordered. A helical transmembrane segment spans residues 1151-1167 (GSYIALPLTLLLLLAGY). Residues 1168–1214 (NHDKLIPLLLQLTSRLQGVRALGQAASDSSGPEDMKRQTKKQKTRRT) are Cytoplasmic-facing. The interval 1190 to 1214 (GQAASDSSGPEDMKRQTKKQKTRRT) is disordered. A phosphoserine mark is found at Ser1196 and Ser1197. The segment covering 1205-1214 (QTKKQKTRRT) has biased composition (basic residues).

In terms of assembly, component of the back of Sec61 (BOS) complex, composed of NCLN/Nicalin, NOMO (NOMO1, NOMO2 or NOMO3) and TMEM147. The BOS complex is part of the multi-pass translocon (MPT) complex, composed of three subcomplexes, the GEL complex (composed of RAB5IF/OPTI and TMCO1), the BOS complex (composed of NCLN/Nicalin, NOMO and TMEM147) and the PAT complex (composed of WDR83OS/Asterix and CCDC47). The MPT complex associates with the SEC61 complex.

Its subcellular location is the endoplasmic reticulum membrane. In terms of biological role, component of the multi-pass translocon (MPT) complex that mediates insertion of multi-pass membrane proteins into the lipid bilayer of membranes. The MPT complex takes over after the SEC61 complex: following membrane insertion of the first few transmembrane segments of proteins by the SEC61 complex, the MPT complex occludes the lateral gate of the SEC61 complex to promote insertion of subsequent transmembrane regions. The sequence is that of BOS complex subunit NOMO1 from Mus musculus (Mouse).